Reading from the N-terminus, the 602-residue chain is GTP-binding protein 2 (602 aa).

Residues 18–64 (GPAMGGNLKARGAGGSSSCGGPKGKKKNGRNRGGKANNPPYLPPEAE) are disordered. Over residues 29-39 (GAGGSSSCGGP) the composition is skewed to gly residues. Positions 40 to 50 (KGKKKNGRNRG) are enriched in basic residues. Residues 170-398 (FLDLRVAVLG…LNILPPLTNS (229 aa)) enclose the tr-type G domain. GTP contacts are provided by residues 179-186 (GNVDSGKS), 260-264 (DLAGH), and 316-319 (SKVD).

It belongs to the TRAFAC class translation factor GTPase superfamily. Classic translation factor GTPase family. GTPBP1 subfamily. As to expression, predominantly expressed in thymus, spleen, and testis. Expressed at lower levels in brain, heart, lung, kidney, and skeletal muscle. In testis, specifically expressed in spermatocytes and round spermatids.

The sequence is that of GTP-binding protein 2 from Mus musculus (Mouse).